A 261-amino-acid polypeptide reads, in one-letter code: Cytochrome c oxidase subunit 3 (261 aa).

At 1–15 (MAHQAHAYHMVDPSP) the chain is on the mitochondrial matrix side. A helical membrane pass occupies residues 16–34 (WPLTGAIAALLLTSGTAVW). The Mitochondrial intermembrane portion of the chain corresponds to 35 to 40 (FHFHSL). Residues 41-66 (TLLTLGNVLLLLTMYQWWRDIIREGT) traverse the membrane as a helical segment. Residues 67–72 (FQGHHT) are Mitochondrial matrix-facing. A helical transmembrane segment spans residues 73 to 105 (PPVQKGLRYGMILFITSEVFFFLGFFWAFYHAS). Residues 106–128 (LAPTPELGGCWPPTGITTLDPFE) lie on the Mitochondrial intermembrane side of the membrane. Residues 129–152 (VPLLNTAVLLASGVTVTWAHHSIM) traverse the membrane as a helical segment. The Mitochondrial matrix segment spans residues 153–155 (EGE). The helical transmembrane segment at 156 to 183 (RKQTIQALTLTILLGFYFTFLQGMEYYE) threads the bilayer. Over 184–190 (APFTIAD) the chain is Mitochondrial intermembrane. A helical transmembrane segment spans residues 191–223 (GVYGSTFFVATGFHGLHVIIGSTFLAVCLLRQV). At 224 to 232 (QYHFTSEHH) the chain is on the mitochondrial matrix side. Residues 233–256 (FGFEAAAWYWHFVDVVWLFLYVSI) traverse the membrane as a helical segment. Topologically, residues 257-261 (YWWGS) are mitochondrial intermembrane.

It belongs to the cytochrome c oxidase subunit 3 family. In terms of assembly, component of the cytochrome c oxidase (complex IV, CIV), a multisubunit enzyme composed of 14 subunits. The complex is composed of a catalytic core of 3 subunits MT-CO1, MT-CO2 and MT-CO3, encoded in the mitochondrial DNA, and 11 supernumerary subunits COX4I, COX5A, COX5B, COX6A, COX6B, COX6C, COX7A, COX7B, COX7C, COX8 and NDUFA4, which are encoded in the nuclear genome. The complex exists as a monomer or a dimer and forms supercomplexes (SCs) in the inner mitochondrial membrane with NADH-ubiquinone oxidoreductase (complex I, CI) and ubiquinol-cytochrome c oxidoreductase (cytochrome b-c1 complex, complex III, CIII), resulting in different assemblies (supercomplex SCI(1)III(2)IV(1) and megacomplex MCI(2)III(2)IV(2)).

The protein localises to the mitochondrion inner membrane. The catalysed reaction is 4 Fe(II)-[cytochrome c] + O2 + 8 H(+)(in) = 4 Fe(III)-[cytochrome c] + 2 H2O + 4 H(+)(out). Component of the cytochrome c oxidase, the last enzyme in the mitochondrial electron transport chain which drives oxidative phosphorylation. The respiratory chain contains 3 multisubunit complexes succinate dehydrogenase (complex II, CII), ubiquinol-cytochrome c oxidoreductase (cytochrome b-c1 complex, complex III, CIII) and cytochrome c oxidase (complex IV, CIV), that cooperate to transfer electrons derived from NADH and succinate to molecular oxygen, creating an electrochemical gradient over the inner membrane that drives transmembrane transport and the ATP synthase. Cytochrome c oxidase is the component of the respiratory chain that catalyzes the reduction of oxygen to water. Electrons originating from reduced cytochrome c in the intermembrane space (IMS) are transferred via the dinuclear copper A center (CU(A)) of subunit 2 and heme A of subunit 1 to the active site in subunit 1, a binuclear center (BNC) formed by heme A3 and copper B (CU(B)). The BNC reduces molecular oxygen to 2 water molecules using 4 electrons from cytochrome c in the IMS and 4 protons from the mitochondrial matrix. The protein is Cytochrome c oxidase subunit 3 (mt-co3) of Oncorhynchus masou (Cherry salmon).